The following is a 343-amino-acid chain: Uroporphyrinogen decarboxylase (343 aa).

Residues 23–27 (RQAGR), Phe42, Asp73, Tyr150, Ser205, and His322 each bind substrate.

This sequence belongs to the uroporphyrinogen decarboxylase family. Homodimer.

The protein localises to the cytoplasm. It carries out the reaction uroporphyrinogen III + 4 H(+) = coproporphyrinogen III + 4 CO2. The protein operates within porphyrin-containing compound metabolism; protoporphyrin-IX biosynthesis; coproporphyrinogen-III from 5-aminolevulinate: step 4/4. Its activity is regulated as follows. Inhibited by N-ethyl-maleimide and phenylglyoxal. Functionally, catalyzes the decarboxylation of four acetate groups of uroporphyrinogen-III to yield coproporphyrinogen-III. The polypeptide is Uroporphyrinogen decarboxylase (hemE) (Cereibacter sphaeroides (strain ATCC 17023 / DSM 158 / JCM 6121 / CCUG 31486 / LMG 2827 / NBRC 12203 / NCIMB 8253 / ATH 2.4.1.) (Rhodobacter sphaeroides)).